Consider the following 673-residue polypeptide: RAS guanyl-releasing protein 4 (673 aa).

2 stretches are compositionally biased toward basic residues: residues 1–10 and 20–32; these read MNRKDSKRKS and GRGR…RHKT. Disordered stretches follow at residues 1–34 and 162–188; these read MNRK…KTCP and QSLG…PGLG. Positions 49–172 constitute an N-terminal Ras-GEF domain; it reads GMLNEGGCSE…SLGDFSSRLS (124 aa). The region spanning 201–432 is the Ras-GEF domain; sequence ETGELAEHLT…YELSYAREPR (232 aa). The region spanning 466–501 is the EF-hand domain; sequence HVEQLVESVFKNYDPDGRGTISQEDFERLSGNFPFA. The segment at 540-590 adopts a Phorbol-ester/DAG-type zinc-finger fold; it reads LHTFQEVTFRKPTFCNSCSGFLWGVTKQGYRCRDCGLCCHRHCRDQVKVEC. Disordered stretches follow at residues 593 to 618 and 638 to 673; these read RPGA…ASCG and RHAW…KLNS. A compositionally biased stretch (pro residues) spans 603–612; it reads PEAPVPPTPV.

It belongs to the RASGRP family.

The protein localises to the cytoplasm. The protein resides in the cell membrane. In terms of biological role, functions as a cation- and diacylglycerol (DAG)-regulated nucleotide exchange factor activating Ras through the exchange of bound GDP for GTP. In neutrophils, participates in a phospholipase C-activating N-formyl peptide-activated GPCR (G protein-coupled receptor) signaling pathway by promoting Ras-mediated activation of PIK3CG/PI3Kgamma to promote neutrophil functional responses. In CD117(+) dendritic cells and mast cells, participates in an lipopolysaccharide (LPS)-activated signaling pathway that stimulates the production of interferon-gamma and other pro-inflammatory cytokines by natural killer (NK) cells. May function in mast cell differentiation. Does not appear to be required for the development of B-cells, DC-cells, T-cells, or NK-cells. The chain is RAS guanyl-releasing protein 4 (RASGRP4) from Bos taurus (Bovine).